Here is a 162-residue protein sequence, read N- to C-terminus: CASP-like protein BLE3 (162 aa).

Residues 1-7 lie on the Cytoplasmic side of the membrane; sequence MAKVHRL. Residues 8 to 28 traverse the membrane as a helical segment; it reads MNAVLRLAAAAAAATAAVVMV. The Extracellular portion of the chain corresponds to 29–50; that stretch reads TSRETTSFFGIQMEAKYSYTPS. The chain crosses the membrane as a helical span at residues 51-71; sequence FIFFVVAYAVAAAYSLLVLAV. The Cytoplasmic portion of the chain corresponds to 72 to 85; that stretch reads PAGSALSRLALTTD. Residues 86-106 traverse the membrane as a helical segment; the sequence is VVLGMVLAGAVASAGAISDIA. The Extracellular segment spans residues 107–128; sequence KNGNSHAGWLPVCGQIHAYCNH. Residues 129 to 149 form a helical membrane-spanning segment; sequence VMAALIAGFVALAVHFVVVMY. Topologically, residues 150–162 are cytoplasmic; sequence SLHIVTDVICPCH.

It belongs to the Casparian strip membrane proteins (CASP) family. As to quaternary structure, homodimer and heterodimers.

It is found in the cell membrane. Its function is as follows. Involved in cell elongation in rice through dual regulation by brassinolide and auxin. This chain is CASP-like protein BLE3 (BLE3), found in Oryza sativa subsp. indica (Rice).